The primary structure comprises 452 residues: Sensor histidine kinase HprS (452 aa).

Residues 1-9 (MKRLSITVR) lie on the Cytoplasmic side of the membrane. Residues 10–30 (LTLLFILLLSVAGAGIVWTLY) traverse the membrane as a helical segment. Residues 31 to 158 (NGLASELKWR…ARHNMLEQYK (128 aa)) lie on the Periplasmic side of the membrane. Residues 159-179 (INSIIICIVAIVLCSVLSPLL) traverse the membrane as a helical segment. Residues 180 to 452 (IRTGLREIKK…VFRITLPQRN (273 aa)) lie on the Cytoplasmic side of the membrane. Residues 181 to 234 (RTGLREIKKLSGVTEALNYNDSREPVEVSALPRELKPLGQALNKMHHALVKDFE) form the HAMP domain. The region spanning 242–452 (DLAHELRTPI…VFRITLPQRN (211 aa)) is the Histidine kinase domain. Residue His-245 is modified to Phosphohistidine; by autocatalysis.

In terms of processing, autophosphorylated.

It localises to the cell inner membrane. It catalyses the reaction ATP + protein L-histidine = ADP + protein N-phospho-L-histidine.. Its function is as follows. Member of a two-component regulatory system HprR/HprS involved in response to hydrogen peroxide. Senses H(2)O(2), maybe via the redox state of the membrane. Activates HprR by phosphorylation. Can also phosphorylate CusR. In Escherichia coli (strain K12), this protein is Sensor histidine kinase HprS.